The chain runs to 419 residues: Gustatory receptor for sugar taste 64c (419 aa).

Residues 1-15 are Cytoplasmic-facing; it reads MQQSGQKGTRNTLQH. A helical transmembrane segment spans residues 16 to 36; it reads AIGPVLVIAQFFGVLPVAGVW. The Extracellular portion of the chain corresponds to 37-48; the sequence is PSCRPERVRFRW. A helical membrane pass occupies residues 49 to 69; it reads ISLSLLAALILFVFSIVDCAL. At 70–82 the chain is on the cytoplasmic side; that stretch reads SSKVVFDHGLKIY. Residues 83-103 form a helical membrane-spanning segment; sequence TIGSLSFSVICIFCFGVFLLL. The Extracellular segment spans residues 104–139; it reads SRRWPYIIRRTAECEQIFLEPEYDCSYGRGYSSRLR. The chain crosses the membrane as a helical span at residues 140 to 160; the sequence is LWGVCMLVAALCEHSTYVGSA. The Cytoplasmic portion of the chain corresponds to 161–204; sequence LYNNHLAIVECKLDANFWQNYFQRERQQLFLIMHFTAWWIPFIE. Residues 205–225 traverse the membrane as a helical segment; the sequence is WTTLSMTFVWNFVDIFLILIC. Over 226–305 the chain is Extracellular; sequence RGMQMRFQQM…FQSKGNYADE (80 aa). A helical membrane pass occupies residues 306–326; it reads LYFWFCLSYVIIRVLNMMFAA. Residues 327–377 lie on the Cytoplasmic side of the membrane; the sequence is SSIPQEAKEISYTLYEIPTEFWCVELRRLNEIFLSDHFALSGKGYFLLTRR. Residues 378–398 traverse the membrane as a helical segment; it reads LIFAMAATLMVYELVLINQMA. The Extracellular segment spans residues 399-419; the sequence is GSEVQKSFCEGGVGSSKSIFS.

Belongs to the insect chemoreceptor superfamily. Gustatory receptor (GR) family. Gr5a subfamily. As to expression, expressed in Gr5a-expressing sugar-sensing cells.

It localises to the cell membrane. Functionally, one of the few identified sugar gustatory receptors identified so far and which promotes the starvation-induced increase of feeding motivation. The sequence is that of Gustatory receptor for sugar taste 64c (Gr64c) from Drosophila melanogaster (Fruit fly).